The primary structure comprises 274 residues: Pre-rRNA-processing protein PNO1 (274 aa).

Positions 1–70 are disordered; sequence MVAPTALKKA…GSRKTHESKT (70 aa). Positions 33-48 are enriched in acidic residues; it reads SIDEDDDDDVLLDDSD. The residue at position 47 (S47) is a Phosphoserine. At T51 the chain carries Phosphothreonine. The segment covering 51-69 has biased composition (basic and acidic residues); the sequence is TAKEEVEGEEGSRKTHESK. Residues 195–247 enclose the KH domain; the sequence is GDHLSRAIGRIAGKDGKTKFAIENATRTRIVLADSKIHILGGFTHIRMARESV.

Belongs to the PNO1 family. As to quaternary structure, component of the small ribosomal subunit, ribosomal RNA processing complex (SSU RRP complex). Interacts with NOB1.

It localises to the cytoplasm. Its subcellular location is the nucleus. The protein resides in the nucleolus. Required for small ribosomal subunit (SSU) synthesis. Has a role in the processing of early nucleolar and late cytoplasmic pre-RNA species. Recruits DIM1 to nucleolar pre-RNAs. Indirectly required for cleavage at the A2 site of the 20S pre-rRNA, forming 18S rRNA, and at A1 and A2 sites of other pre-rRNAs. This chain is Pre-rRNA-processing protein PNO1 (PNO1), found in Saccharomyces cerevisiae (strain ATCC 204508 / S288c) (Baker's yeast).